Consider the following 316-residue polypeptide: Probable cell division protein WhiA (316 aa).

A DNA-binding region (H-T-H motif) is located at residues 280-313 (SLKELGEMLEPPVGKSGVNHRLRKIEKIAEELRT).

Belongs to the WhiA family.

Involved in cell division and chromosome segregation. The polypeptide is Probable cell division protein WhiA (Clostridium perfringens (strain 13 / Type A)).